A 437-amino-acid chain; its full sequence is Sonic hedgehog protein (437 aa).

The signal sequence occupies residues 1–24 (MLLLLARCFLVILASSLLVCPGLA). A lipid anchor (N-palmitoyl cysteine) is attached at Cys25. Positions 33–39 (KRRHPKK) match the Cardin-Weintraub motif. Positions 90, 91, 96, 126, 127, 130, and 132 each coordinate Ca(2+). Residues His141, Asp148, and His183 each coordinate Zn(2+). Residue Gly198 is the site of Cholesterol glycine ester attachment. N-linked (GlcNAc...) asparagine glycosylation is present at Asn279.

The protein belongs to the hedgehog family. Interacts with HHATL/GUP1 which negatively regulates HHAT-mediated palmitoylation of the SHH N-terminus. Interacts with BOC and CDON. Interacts with HHIP. Interacts with DISP1 via its cholesterol anchor. Interacts with SCUBE2. Interacts with glypican GPC3. In terms of assembly, multimer. In terms of processing, the C-terminal domain displays an autoproteolysis activity and a cholesterol transferase activity. Both activities result in the cleavage of the full-length protein and covalent attachment of a cholesterol moiety to the C-terminal of the newly generated N-terminal fragment (ShhN). Cholesterylation is required for the sonic hedgehog protein N-product targeting to lipid rafts and multimerization. ShhN is the active species in both local and long-range signaling, whereas the C-product (ShhC) is degraded in the endoplasmic reticulum. Post-translationally, N-palmitoylation by HHAT of ShhN is required for sonic hedgehog protein N-product multimerization and full activity. It is a prerequisite for the membrane-proximal positioning and the subsequent shedding of this N-terminal peptide. The lipidated N- and C-terminal peptides of ShhNp can be cleaved (shedding). The N-terminal palmitoylated peptide is cleaved at the Cardin-Weintraub (CW) motif site. The cleavage reduced the interactions with heparan sulfate. The cleavage is enhanced by SCUBE2. In terms of tissue distribution, expressed in a number of embryonic tissues including the notochord, ventral neural tube, floor plate, lung bud, zone of polarizing activity and posterior distal mesenchyme of limbs. In the adult, expressed in lung and neural retina.

The protein resides in the endoplasmic reticulum membrane. The protein localises to the golgi apparatus membrane. Its subcellular location is the cell membrane. The enzyme catalyses glycyl-L-cysteinyl-[protein] + cholesterol + H(+) = [protein]-C-terminal glycyl cholesterol ester + N-terminal L-cysteinyl-[protein]. In terms of biological role, the C-terminal part of the sonic hedgehog protein precursor displays an autoproteolysis and a cholesterol transferase activity. Both activities result in the cleavage of the full-length protein into two parts (ShhN and ShhC) followed by the covalent attachment of a cholesterol moiety to the C-terminal of the newly generated ShhN. Both activities occur in the reticulum endoplasmic. Once cleaved, ShhC is degraded in the endoplasmic reticulum. The dually lipidated sonic hedgehog protein N-product (ShhNp) is a morphogen which is essential for a variety of patterning events during development. Induces ventral cell fate in the neural tube and somites. Involved in the patterning of the anterior-posterior axis of the developing limb bud. Essential for axon guidance. Binds to the patched (PTCH1) receptor, which functions in association with smoothened (SMO), to activate the transcription of target genes. In the absence of SHH, PTCH1 represses the constitutive signaling activity of SMO. This chain is Sonic hedgehog protein, found in Mus musculus (Mouse).